The chain runs to 850 residues: Protein translocase subunit SecA 2 (850 aa).

ATP is bound by residues Q83, 101-105 (GEGKT), and D491.

It belongs to the SecA family. As to quaternary structure, monomer and homodimer. Part of the essential Sec protein translocation apparatus which comprises SecA, SecYEG and auxiliary proteins SecDF. Other proteins may also be involved.

The protein localises to the cell membrane. It localises to the cytoplasm. The catalysed reaction is ATP + H2O + cellular proteinSide 1 = ADP + phosphate + cellular proteinSide 2.. In terms of biological role, part of the Sec protein translocase complex. Interacts with the SecYEG preprotein conducting channel. Has a central role in coupling the hydrolysis of ATP to the transfer of proteins into and across the cell membrane, serving as an ATP-driven molecular motor driving the stepwise translocation of polypeptide chains across the membrane. This Mycolicibacterium vanbaalenii (strain DSM 7251 / JCM 13017 / BCRC 16820 / KCTC 9966 / NRRL B-24157 / PYR-1) (Mycobacterium vanbaalenii) protein is Protein translocase subunit SecA 2.